The chain runs to 29 residues: Cyclotide mech-3 (29 aa).

The segment at residues 1-29 is a cross-link (cyclopeptide (Gly-Asn)); sequence GLPTCGETCTLGKCNTPKCTCNWPICYKN. 3 disulfides stabilise this stretch: Cys-5-Cys-19, Cys-9-Cys-21, and Cys-14-Cys-26.

Post-translationally, this is a cyclic peptide. In terms of processing, contains 3 disulfide bonds.

In terms of biological role, probably participates in a plant defense mechanism (Potential). Binds to and induces leakage in phospholipd membranes, particularly ones containing 1-palmitoyl-2-oleophosphatidylethanolamine (POPE). In vitro, displays cytotoxicity against cultured cells but no hemolytic activity towards fresh erythrocytes. This Melicytus chathamicus (Chatham Island mahoe) protein is Cyclotide mech-3.